Here is a 185-residue protein sequence, read N- to C-terminus: MSEKNVLDENSKNILLDSIRTINDYPKPGIIFKDITTLLNNKNAFNLLMDHLEERYKSYNLDYIAGVEARGFFFASALASRLKIGFVPVRKKGKLPSTTICEKYELEYGFSEVELHLDAFNNEKNVNVLLIDDIIVSGGTAYAAANLIKKLNVNLVESCFLMNIAILDGAKKLSEISPVYCVLEI.

Belongs to the purine/pyrimidine phosphoribosyltransferase family. As to quaternary structure, homodimer.

Its subcellular location is the cytoplasm. The catalysed reaction is AMP + diphosphate = 5-phospho-alpha-D-ribose 1-diphosphate + adenine. Its pathway is purine metabolism; AMP biosynthesis via salvage pathway; AMP from adenine: step 1/1. In terms of biological role, catalyzes a salvage reaction resulting in the formation of AMP, that is energically less costly than de novo synthesis. The chain is Adenine phosphoribosyltransferase from Aliarcobacter butzleri (strain RM4018) (Arcobacter butzleri).